Here is a 598-residue protein sequence, read N- to C-terminus: Protein HIGH CHLOROPHYLL FLUORESCENCE PHENOTYPE 173, chloroplastic (598 aa).

The N-terminal 79 residues, 1 to 79, are a transit peptide targeting the chloroplast; sequence MVGSIVGSNM…ITTKESEETV (79 aa). Positions 42 to 106 are disordered; sequence VIPRAQSSSS…PTLKLDDVNP (65 aa). The segment covering 73 to 84 has biased composition (basic and acidic residues); sequence KESEETVAKKLD. Residues 87–97 show a composition bias toward pro residues; the sequence is PPSPQSPPSPP.

Belongs to the NmrA-type oxidoreductase family. In terms of assembly, component of a high molecular weight complex containing psbA mRNA, OHP1, OHP2 and HCF244, and PSII core proteins D1/D2, HCF136 and HCF173. Interacts with LPE1.

The protein resides in the plastid. The protein localises to the chloroplast membrane. Its subcellular location is the chloroplast thylakoid membrane. It is found in the chloroplast stroma. Its function is as follows. Auxiliary factor required, together with HCF244, for the biogenesis of photosystem II (PSII), especially for the synthesis of the reaction center proteins (e.g. D1), via the regulation of the corresponding mRNA (e.g. psbA) translation initiation (ribosomal loading) and stabilization. This chain is Protein HIGH CHLOROPHYLL FLUORESCENCE PHENOTYPE 173, chloroplastic, found in Arabidopsis thaliana (Mouse-ear cress).